The sequence spans 344 residues: 4-hydroxy-3-methylbut-2-en-1-yl diphosphate synthase (flavodoxin) (344 aa).

C253, C256, C288, and E295 together coordinate [4Fe-4S] cluster.

It belongs to the IspG family. Requires [4Fe-4S] cluster as cofactor.

The catalysed reaction is (2E)-4-hydroxy-3-methylbut-2-enyl diphosphate + oxidized [flavodoxin] + H2O + 2 H(+) = 2-C-methyl-D-erythritol 2,4-cyclic diphosphate + reduced [flavodoxin]. The protein operates within isoprenoid biosynthesis; isopentenyl diphosphate biosynthesis via DXP pathway; isopentenyl diphosphate from 1-deoxy-D-xylulose 5-phosphate: step 5/6. In terms of biological role, converts 2C-methyl-D-erythritol 2,4-cyclodiphosphate (ME-2,4cPP) into 1-hydroxy-2-methyl-2-(E)-butenyl 4-diphosphate. In Thermotoga petrophila (strain ATCC BAA-488 / DSM 13995 / JCM 10881 / RKU-1), this protein is 4-hydroxy-3-methylbut-2-en-1-yl diphosphate synthase (flavodoxin).